The chain runs to 542 residues: 1-aminocyclopropane-1-carboxylate synthase 6 (542 aa).

The interval 1–28 is disordered; sequence MRRSGNGGAAKKKKKRSASAASERRPRA. At lysine 379 the chain carries N6-(pyridoxal phosphate)lysine.

This sequence belongs to the class-I pyridoxal-phosphate-dependent aminotransferase family. Pyridoxal 5'-phosphate is required as a cofactor. In terms of tissue distribution, expressed in leaves.

It localises to the plastid. The protein localises to the amyloplast membrane. It carries out the reaction S-adenosyl-L-methionine = 1-aminocyclopropane-1-carboxylate + S-methyl-5'-thioadenosine + H(+). Its pathway is alkene biosynthesis; ethylene biosynthesis via S-adenosyl-L-methionine; ethylene from S-adenosyl-L-methionine: step 1/2. In terms of biological role, catalyzes the formation of 1-aminocyclopropane-1-carboxylate, a direct precursor of ethylene in higher plants. Required for the regulation of starch grain size in endosperm. The polypeptide is 1-aminocyclopropane-1-carboxylate synthase 6 (Oryza sativa subsp. japonica (Rice)).